The following is a 348-amino-acid chain: Putative transport protein HP_0567 (348 aa).

8 consecutive transmembrane segments (helical) span residues 6–26 (FFWILFLIGFYWMIYLYQDFL), 27–47 (MDALIAGLLCVGFFQVKVFLD), 56–76 (SFLCVLILASVLIVPLYFIVY), 143–163 (LKLITDALFILGLLFFFFYYG), 194–214 (IVLLTSLITVILEGVAFGVMI), 224–244 (LGILYGLASLVPAVGGALIWI), 266–286 (SILLISVLIDSVIKPILIVFI), and 300–320 (MLIFFSMIAGISQFGFWGIIV).

The protein belongs to the autoinducer-2 exporter (AI-2E) (TC 2.A.86) family.

The protein resides in the cell membrane. This is Putative transport protein HP_0567 from Helicobacter pylori (strain ATCC 700392 / 26695) (Campylobacter pylori).